Reading from the N-terminus, the 325-residue chain is Protease HtpX homolog 2 (325 aa).

Helical transmembrane passes span 17 to 37 (IAIL…FFGF) and 42 to 62 (LLIT…WLFG). His-146 provides a ligand contact to Zn(2+). Glu-147 is an active-site residue. His-150 lines the Zn(2+) pocket. Helical transmembrane passes span 158-178 (LLLA…GLWW) and 195-215 (ILFL…LFVL). Glu-222 is a Zn(2+) binding site.

It belongs to the peptidase M48B family. Zn(2+) serves as cofactor.

The protein localises to the cell membrane. In Sulfurisphaera tokodaii (strain DSM 16993 / JCM 10545 / NBRC 100140 / 7) (Sulfolobus tokodaii), this protein is Protease HtpX homolog 2.